Reading from the N-terminus, the 226-residue chain is Glutathione peroxidase 3 (226 aa).

The first 24 residues, 1-24 (MARILRASCLLSLLLAGFVPPGRG), serve as a signal peptide directing secretion. Sec-73 is a catalytic residue. Residue Sec-73 is a non-standard amino acid, selenocysteine.

Belongs to the glutathione peroxidase family. As to quaternary structure, homotetramer. As to expression, secreted in plasma.

It is found in the secreted. It catalyses the reaction 2 glutathione + H2O2 = glutathione disulfide + 2 H2O. The enzyme catalyses tert-butyl hydroperoxide + 2 glutathione = tert-butanol + glutathione disulfide + H2O. Its function is as follows. Protects cells and enzymes from oxidative damage, by catalyzing the reduction of hydrogen peroxide, lipid peroxides and organic hydroperoxide, by glutathione. This is Glutathione peroxidase 3 from Rattus norvegicus (Rat).